The following is a 130-amino-acid chain: Transcription antitermination protein NusB (130 aa).

The protein belongs to the NusB family.

Functionally, involved in transcription antitermination. Required for transcription of ribosomal RNA (rRNA) genes. Binds specifically to the boxA antiterminator sequence of the ribosomal RNA (rrn) operons. The chain is Transcription antitermination protein NusB from Sulfurovum sp. (strain NBC37-1).